The primary structure comprises 327 residues: tRNA uridine(34) hydroxylase (327 aa).

The Rhodanese domain maps to 130 to 224; sequence LDEDTVVLDT…YGKDPEVQGE (95 aa). The active-site Cysteine persulfide intermediate is the Cys-184.

It belongs to the TrhO family.

The enzyme catalyses uridine(34) in tRNA + AH2 + O2 = 5-hydroxyuridine(34) in tRNA + A + H2O. Its function is as follows. Catalyzes oxygen-dependent 5-hydroxyuridine (ho5U) modification at position 34 in tRNAs. The sequence is that of tRNA uridine(34) hydroxylase from Streptococcus thermophilus (strain ATCC BAA-250 / LMG 18311).